The primary structure comprises 474 residues: Glutamate--tRNA ligase 2 (474 aa).

The 'HIGH' region signature appears at 16-26 (PSPTGFLHIGG). The 'KMSKS' region signature appears at 245-249 (KLSKR). Lysine 248 lines the ATP pocket.

Belongs to the class-I aminoacyl-tRNA synthetase family. Glutamate--tRNA ligase type 1 subfamily. Monomer.

The protein localises to the cytoplasm. It carries out the reaction tRNA(Glu) + L-glutamate + ATP = L-glutamyl-tRNA(Glu) + AMP + diphosphate. Functionally, catalyzes the attachment of glutamate to tRNA(Glu) in a two-step reaction: glutamate is first activated by ATP to form Glu-AMP and then transferred to the acceptor end of tRNA(Glu). This chain is Glutamate--tRNA ligase 2, found in Rhizorhabdus wittichii (strain DSM 6014 / CCUG 31198 / JCM 15750 / NBRC 105917 / EY 4224 / RW1) (Sphingomonas wittichii).